A 457-amino-acid polypeptide reads, in one-letter code: Pup--protein ligase (457 aa).

Mg(2+) is bound at residue E9. R53 provides a ligand contact to ATP. Y55 contacts Mg(2+). D57 functions as the Proton acceptor in the catalytic mechanism. A Mg(2+)-binding site is contributed by E63. T66 and W424 together coordinate ATP.

The protein belongs to the Pup ligase/Pup deamidase family. Pup-conjugating enzyme subfamily.

The enzyme catalyses ATP + [prokaryotic ubiquitin-like protein]-L-glutamate + [protein]-L-lysine = ADP + phosphate + N(6)-([prokaryotic ubiquitin-like protein]-gamma-L-glutamyl)-[protein]-L-lysine.. It functions in the pathway protein degradation; proteasomal Pup-dependent pathway. The protein operates within protein modification; protein pupylation. Catalyzes the covalent attachment of the prokaryotic ubiquitin-like protein modifier Pup to the proteasomal substrate proteins, thereby targeting them for proteasomal degradation. This tagging system is termed pupylation. The ligation reaction involves the side-chain carboxylate of the C-terminal glutamate of Pup and the side-chain amino group of a substrate lysine. The sequence is that of Pup--protein ligase from Xylanimonas cellulosilytica (strain DSM 15894 / JCM 12276 / CECT 5975 / KCTC 9989 / LMG 20990 / NBRC 107835 / XIL07).